The chain runs to 79 residues: Putative antitoxin VapB1 (79 aa).

Its function is as follows. Antitoxin component of a possible type II toxin-antitoxin (TA) system. The cognate toxin is VapC1. The sequence is that of Putative antitoxin VapB1 (vapB1) from Mycobacterium tuberculosis (strain ATCC 25618 / H37Rv).